The following is a 136-amino-acid chain: FK506-binding protein 2 (136 aa).

A signal peptide spans 1-17 (MLSQIWILFTFMVCVIA). Positions 45 to 134 (GDMVSVHYTG…DFDVELVDIA (90 aa)) constitute a PPIase FKBP-type domain.

The protein belongs to the FKBP-type PPIase family. FKBP2 subfamily.

It is found in the endoplasmic reticulum. It catalyses the reaction [protein]-peptidylproline (omega=180) = [protein]-peptidylproline (omega=0). With respect to regulation, inhibited by both FK506 and rapamycin. Its function is as follows. PPIases accelerate the folding of proteins. It catalyzes the cis-trans isomerization of proline imidic peptide bonds in oligopeptides. In Candida glabrata (strain ATCC 2001 / BCRC 20586 / JCM 3761 / NBRC 0622 / NRRL Y-65 / CBS 138) (Yeast), this protein is FK506-binding protein 2 (FPR2).